We begin with the raw amino-acid sequence, 635 residues long: Threonine--tRNA ligase (635 aa).

Residues 1–61 (MVSIRLPDGS…DRDASLAIVT (61 aa)) form the TGS domain. The catalytic stretch occupies residues 242 to 533 (DHRKLGKQLD…LIEHHAGAMP (292 aa)). Positions 333, 384, and 510 each coordinate Zn(2+).

Belongs to the class-II aminoacyl-tRNA synthetase family. Homodimer. Zn(2+) serves as cofactor.

Its subcellular location is the cytoplasm. The enzyme catalyses tRNA(Thr) + L-threonine + ATP = L-threonyl-tRNA(Thr) + AMP + diphosphate + H(+). In terms of biological role, catalyzes the attachment of threonine to tRNA(Thr) in a two-step reaction: L-threonine is first activated by ATP to form Thr-AMP and then transferred to the acceptor end of tRNA(Thr). Also edits incorrectly charged L-seryl-tRNA(Thr). This chain is Threonine--tRNA ligase, found in Burkholderia cenocepacia (strain ATCC BAA-245 / DSM 16553 / LMG 16656 / NCTC 13227 / J2315 / CF5610) (Burkholderia cepacia (strain J2315)).